A 237-amino-acid chain; its full sequence is MQKKAELYRGKAKTVYTTESSDYLILEFRNDTSALDGQRIEQFDRKGMVNNKFNYFIMNKLEEAGIPTQMERLLSDNEVLVKKLDMVPVECVIRNRAAGSLVKRLGIEEGTVLNPPIFDLFLKDDARHDPMVNESYCETFGWVSKENLAEMKRLSYKANDVLSELFDKAGLILVDFKLEFGLFNGKVVLGDEFSPDGSRLWDKNTLDKMDKDRFRQSLGGLIEAYEEVARRIGVSLD.

It belongs to the SAICAR synthetase family.

It catalyses the reaction 5-amino-1-(5-phospho-D-ribosyl)imidazole-4-carboxylate + L-aspartate + ATP = (2S)-2-[5-amino-1-(5-phospho-beta-D-ribosyl)imidazole-4-carboxamido]succinate + ADP + phosphate + 2 H(+). The protein operates within purine metabolism; IMP biosynthesis via de novo pathway; 5-amino-1-(5-phospho-D-ribosyl)imidazole-4-carboxamide from 5-amino-1-(5-phospho-D-ribosyl)imidazole-4-carboxylate: step 1/2. The protein is Phosphoribosylaminoimidazole-succinocarboxamide synthase of Proteus mirabilis (strain HI4320).